The chain runs to 132 residues: Glycine cleavage system H protein (132 aa).

Positions 24–106 constitute a Lipoyl-binding domain; it reads RVRVGITDYA…YGAGWLFELE (83 aa). Lys-65 is modified (N6-lipoyllysine).

It belongs to the GcvH family. As to quaternary structure, the glycine cleavage system is composed of four proteins: P, T, L and H. (R)-lipoate is required as a cofactor.

Its function is as follows. The glycine cleavage system catalyzes the degradation of glycine. The H protein shuttles the methylamine group of glycine from the P protein to the T protein. The sequence is that of Glycine cleavage system H protein from Nocardia farcinica (strain IFM 10152).